The sequence spans 453 residues: Enolase (453 aa).

(2R)-2-phosphoglycerate is bound at residue Q163. The active-site Proton donor is the E205. Residues D258, E308, and D335 each contribute to the Mg(2+) site. (2R)-2-phosphoglycerate contacts are provided by K360, R389, S390, and K411. Residue K360 is the Proton acceptor of the active site.

This sequence belongs to the enolase family. Mg(2+) is required as a cofactor.

It localises to the cytoplasm. It is found in the secreted. Its subcellular location is the cell surface. The enzyme catalyses (2R)-2-phosphoglycerate = phosphoenolpyruvate + H2O. The protein operates within carbohydrate degradation; glycolysis; pyruvate from D-glyceraldehyde 3-phosphate: step 4/5. Its function is as follows. Catalyzes the reversible conversion of 2-phosphoglycerate (2-PG) into phosphoenolpyruvate (PEP). It is essential for the degradation of carbohydrates via glycolysis. The protein is Enolase of Mesoplasma florum (strain ATCC 33453 / NBRC 100688 / NCTC 11704 / L1) (Acholeplasma florum).